Consider the following 394-residue polypeptide: Elongation factor Tu (394 aa).

One can recognise a tr-type G domain in the interval lysine 10 to glutamate 204. Residues glycine 19–threonine 26 are G1. Glycine 19–threonine 26 contacts GTP. Position 26 (threonine 26) interacts with Mg(2+). The segment at glycine 60–asparagine 64 is G2. The G3 stretch occupies residues aspartate 81–glycine 84. GTP contacts are provided by residues aspartate 81 to histidine 85 and asparagine 136 to aspartate 139. The G4 stretch occupies residues asparagine 136–aspartate 139. Residues serine 174–leucine 176 form a G5 region.

Belongs to the TRAFAC class translation factor GTPase superfamily. Classic translation factor GTPase family. EF-Tu/EF-1A subfamily. As to quaternary structure, monomer.

Its subcellular location is the cytoplasm. The enzyme catalyses GTP + H2O = GDP + phosphate + H(+). In terms of biological role, GTP hydrolase that promotes the GTP-dependent binding of aminoacyl-tRNA to the A-site of ribosomes during protein biosynthesis. The chain is Elongation factor Tu from Neisseria gonorrhoeae.